An 804-amino-acid polypeptide reads, in one-letter code: Type 2 DNA topoisomerase 6 subunit B (804 aa).

Residues Asn-58, Asp-89, 110–111, 120–127, and Lys-629 each bind ATP; these read SR and GQQGIGIS.

This sequence belongs to the TOP6B family. As to quaternary structure, homodimer. Heterotetramer of two Top6A and two Top6B chains.

The catalysed reaction is ATP-dependent breakage, passage and rejoining of double-stranded DNA.. In terms of biological role, relaxes both positive and negative superturns and exhibits a strong decatenase activity. The chain is Type 2 DNA topoisomerase 6 subunit B from Halobacterium salinarum (strain ATCC 29341 / DSM 671 / R1).